A 267-amino-acid chain; its full sequence is Phosphonoacetaldehyde hydrolase (267 aa).

Aspartate 10 acts as the Nucleophile in catalysis. The Mg(2+) site is built by aspartate 10 and alanine 12. Residue lysine 51 is the Schiff-base intermediate with substrate of the active site. Position 184 (aspartate 184) interacts with Mg(2+).

This sequence belongs to the HAD-like hydrolase superfamily. PhnX family. As to quaternary structure, homodimer. Mg(2+) serves as cofactor.

The catalysed reaction is phosphonoacetaldehyde + H2O = acetaldehyde + phosphate + H(+). In terms of biological role, involved in phosphonate degradation. The protein is Phosphonoacetaldehyde hydrolase of Paraburkholderia phytofirmans (strain DSM 17436 / LMG 22146 / PsJN) (Burkholderia phytofirmans).